The chain runs to 691 residues: Elongation factor G (691 aa).

The tr-type G domain occupies 8-283 (EDYRNFGIMA…AVVDYLPSPA (276 aa)). Residues 17 to 24 (AHIDAGKT), 81 to 85 (DTPGH), and 135 to 138 (NKMD) each bind GTP.

Belongs to the TRAFAC class translation factor GTPase superfamily. Classic translation factor GTPase family. EF-G/EF-2 subfamily.

The protein localises to the cytoplasm. Functionally, catalyzes the GTP-dependent ribosomal translocation step during translation elongation. During this step, the ribosome changes from the pre-translocational (PRE) to the post-translocational (POST) state as the newly formed A-site-bound peptidyl-tRNA and P-site-bound deacylated tRNA move to the P and E sites, respectively. Catalyzes the coordinated movement of the two tRNA molecules, the mRNA and conformational changes in the ribosome. This chain is Elongation factor G, found in Methylobacterium sp. (strain 4-46).